Reading from the N-terminus, the 536-residue chain is Testis-specific expressed protein 55 (536 aa).

Over residues 1–11 (MEEPPQEALAE) the composition is skewed to low complexity. Disordered regions lie at residues 1-287 (MEEP…PGTS) and 328-348 (SNAD…QTDH). Residues 35–52 (QKNQAERKADNHTAHRIA) show a composition bias toward basic and acidic residues. 2 stretches are compositionally biased toward polar residues: residues 62–85 (QAES…STPG) and 105–136 (QVNQ…QVSG). Basic and acidic residues-rich tracts occupy residues 138–158 (TEER…ERRT) and 173–222 (RGSR…ERRP). A compositionally biased stretch (low complexity) spans 226-242 (IDSGSSVPSDQSPSVQI). Positions 243 to 255 (DSGSSVPSDQRPS) are enriched in polar residues. Residues 339 to 348 (HYTESDQTDH) are compositionally biased toward basic and acidic residues.

As to expression, testis-specific.

It is found in the nucleus. It localises to the cell projection. Its subcellular location is the cilium. The protein resides in the flagellum. The polypeptide is Testis-specific expressed protein 55 (Homo sapiens (Human)).